The following is a 289-amino-acid chain: Serine/threonine-protein phosphatase Pgam5, mitochondrial (289 aa).

The helical transmembrane segment at 7-23 (FVCGTGAGLAVYYLQRL) threads the bilayer.

Belongs to the phosphoglycerate mutase family. BPG-dependent PGAM subfamily. Interacts with Pk92B/ASK1.

It is found in the mitochondrion outer membrane. It catalyses the reaction O-phospho-L-seryl-[protein] + H2O = L-seryl-[protein] + phosphate. The catalysed reaction is O-phospho-L-threonyl-[protein] + H2O = L-threonyl-[protein] + phosphate. Displays phosphatase activity for serine/threonine residues, and dephosphorylates and activates Pk92B kinase. Has apparently no phosphoglycerate mutase activity. The sequence is that of Serine/threonine-protein phosphatase Pgam5, mitochondrial from Drosophila erecta (Fruit fly).